A 137-amino-acid chain; its full sequence is Large ribosomal subunit protein uL22 (137 aa).

Belongs to the universal ribosomal protein uL22 family. In terms of assembly, part of the 50S ribosomal subunit.

This protein binds specifically to 23S rRNA; its binding is stimulated by other ribosomal proteins, e.g. L4, L17, and L20. It is important during the early stages of 50S assembly. It makes multiple contacts with different domains of the 23S rRNA in the assembled 50S subunit and ribosome. Its function is as follows. The globular domain of the protein is located near the polypeptide exit tunnel on the outside of the subunit, while an extended beta-hairpin is found that lines the wall of the exit tunnel in the center of the 70S ribosome. The sequence is that of Large ribosomal subunit protein uL22 from Flavobacterium psychrophilum (strain ATCC 49511 / DSM 21280 / CIP 103535 / JIP02/86).